Consider the following 73-residue polypeptide: Putative antitoxin VapB38 (73 aa).

In terms of biological role, probable antitoxin component of a type II toxin-antitoxin (TA) system. Its putative cognate toxin is VapC38. This chain is Putative antitoxin VapB38 (vapB38), found in Mycobacterium tuberculosis (strain ATCC 25618 / H37Rv).